Reading from the N-terminus, the 264-residue chain is Undecaprenyl-diphosphatase (264 aa).

6 helical membrane-spanning segments follow: residues 41–61 (NLAF…VILW), 82–102 (YVIN…FFKD), 106–126 (AIFG…AALL), 140–160 (ISMK…LPGL), 213–233 (IPAL…CLAC), and 244–264 (KLIY…ITQL).

It belongs to the UppP family.

The protein resides in the cell inner membrane. The enzyme catalyses di-trans,octa-cis-undecaprenyl diphosphate + H2O = di-trans,octa-cis-undecaprenyl phosphate + phosphate + H(+). In terms of biological role, catalyzes the dephosphorylation of undecaprenyl diphosphate (UPP). Confers resistance to bacitracin. This is Undecaprenyl-diphosphatase from Bacteroides thetaiotaomicron (strain ATCC 29148 / DSM 2079 / JCM 5827 / CCUG 10774 / NCTC 10582 / VPI-5482 / E50).